We begin with the raw amino-acid sequence, 1001 residues long: Translation initiation factor IF-2 (1001 aa).

The segment at 56–418 (PDYVHDPNAV…VEAGPPPISR (363 aa)) is disordered. The span at 70–84 (TEAHEERHEHEEAHE) shows a compositional bias: basic and acidic residues. The span at 85 to 108 (PAAAPKAAVEPETPVAPAPEAAPA) shows a compositional bias: low complexity. Over residues 109 to 120 (AKEERPAPEEPA) the composition is skewed to basic and acidic residues. Composition is skewed to pro residues over residues 136–170 (IHPP…PHAP), 180–194 (PARP…PSQT), 204–217 (RPAP…PTTT), 229–252 (QPFP…PPQQ), 305–322 (PAAP…PVPG), and 345–357 (GMPP…PRPQ). Residues 379–410 (SRGRPGDRRPVRQQRERTEEEKILRPQRRHVE) are compositionally biased toward basic and acidic residues. The region spanning 499 to 668 (RRAPVVTIMG…LLVADMQDLK (170 aa)) is the tr-type G domain. The tract at residues 508 to 515 (GHVDHGKT) is G1. 508–515 (GHVDHGKT) contributes to the GTP binding site. Positions 533-537 (GITQH) are G2. A G3 region spans residues 554–557 (DTPG). GTP is bound by residues 554–558 (DTPGH) and 608–611 (NKID). The interval 608–611 (NKID) is G4. Positions 644 to 646 (SAR) are G5.

Belongs to the TRAFAC class translation factor GTPase superfamily. Classic translation factor GTPase family. IF-2 subfamily.

The protein resides in the cytoplasm. Its function is as follows. One of the essential components for the initiation of protein synthesis. Protects formylmethionyl-tRNA from spontaneous hydrolysis and promotes its binding to the 30S ribosomal subunits. Also involved in the hydrolysis of GTP during the formation of the 70S ribosomal complex. The chain is Translation initiation factor IF-2 from Solibacter usitatus (strain Ellin6076).